The primary structure comprises 805 residues: U-box domain-containing protein 32 (805 aa).

2 disordered regions span residues 181–205 (SNNR…SEKL) and 226–284 (EKDT…EREG). Over residues 226-239 (EKDTGQLEREKVEP) the composition is skewed to basic and acidic residues. The segment covering 245–257 (FSSGSSSSFGEPV) has biased composition (low complexity). A coiled-coil region spans residues 331-434 (LEGLCIKESS…EVNALRRLVK (104 aa)). One can recognise a Protein kinase domain in the interval 460-718 (FDPSWKLGEG…FIDRMKAPEV (259 aa)). Residues 466 to 474 (LGEGKYGSV) and lysine 487 contribute to the ATP site. In terms of domain architecture, U-box spans 734–805 (RPPSHYLCPI…LAIQDWQNQW (72 aa)).

Belongs to the protein kinase superfamily. Ser/Thr protein kinase family.

The catalysed reaction is S-ubiquitinyl-[E2 ubiquitin-conjugating enzyme]-L-cysteine + [acceptor protein]-L-lysine = [E2 ubiquitin-conjugating enzyme]-L-cysteine + N(6)-ubiquitinyl-[acceptor protein]-L-lysine.. Its pathway is protein modification; protein ubiquitination. Its function is as follows. Functions as an E3 ubiquitin ligase. This chain is U-box domain-containing protein 32 (PUB32), found in Arabidopsis thaliana (Mouse-ear cress).